The sequence spans 85 residues: Beta-insect depressant toxin Lqh-dprIT3e (85 aa).

An N-terminal signal peptide occupies residues 1–21; that stretch reads MKLLLLLTISASMLIEGLVNA. The region spanning 22–82 is the LCN-type CS-alpha/beta domain; sequence DGYIRGGDGC…EWDYETDTCG (61 aa). Disulfide bonds link Cys31/Cys81, Cys35/Cys56, Cys42/Cys63, and Cys46/Cys65. Glycine amide is present on Gly82.

It belongs to the long (4 C-C) scorpion toxin superfamily. Sodium channel inhibitor family. Beta subfamily. As to expression, expressed by the venom gland.

Its subcellular location is the secreted. Depressant insect beta-toxins cause a transient contraction paralysis followed by a slow flaccid paralysis. They bind voltage-independently at site-4 of sodium channels (Nav) and block action potentials, primarily by depolarizing the axonal membrane and suppressing the sodium current. This depressant toxin is active only on insects. It is found in a relatively small amount in the venom. The protein is Beta-insect depressant toxin Lqh-dprIT3e of Leiurus hebraeus (Hebrew deathstalker scorpion).